We begin with the raw amino-acid sequence, 288 residues long: Beta-lactamase CARB-4 (288 aa).

Residues 1 to 17 (MKLLLVFSLLIPSMVFA) form the signal peptide. Ser-65 functions as the Acyl-ester intermediate in the catalytic mechanism. Cysteines 72 and 118 form a disulfide. Residue 229–231 (RSG) coordinates substrate.

The protein belongs to the class-A beta-lactamase family.

The enzyme catalyses a beta-lactam + H2O = a substituted beta-amino acid. Its activity is regulated as follows. Inhibited by clavulanic acid and sulbactam. Its function is as follows. Hydrolyzes carbenicillin. Methicillin and oxacillin are weakly hydrolyzed. The protein is Beta-lactamase CARB-4 (carB4) of Pseudomonas aeruginosa.